The primary structure comprises 389 residues: Phosphoglycerate kinase (389 aa).

Substrate is bound by residues 21 to 23 (DLN), Arg36, 59 to 62 (HLGR), Arg112, and Arg145. ATP-binding positions include Lys196, Glu313, and 342 to 345 (GGDT).

This sequence belongs to the phosphoglycerate kinase family. As to quaternary structure, monomer.

It localises to the cytoplasm. It catalyses the reaction (2R)-3-phosphoglycerate + ATP = (2R)-3-phospho-glyceroyl phosphate + ADP. The protein operates within carbohydrate degradation; glycolysis; pyruvate from D-glyceraldehyde 3-phosphate: step 2/5. The polypeptide is Phosphoglycerate kinase (Mannheimia succiniciproducens (strain KCTC 0769BP / MBEL55E)).